A 310-amino-acid polypeptide reads, in one-letter code: MDFVAGAIGGVCGVAVGYPLDTVKVRIQTEAKYAGIWHCIRDTYRQERVWGFYRGLSLPVCTVSLVSSVSFGTYHHCLAHICRFRYGSTDAKPTKADITLSGCASGLVRVFLTSPTEVAKVRLQTQTQAQTQQRRSSASWTSGAPALCPTPTACLEPRPKYSGPLHCLVTVAREEGLRGLYKGSSALLLREGHSFATYFLSYAMLCEWLTPAGHSQPDVLGVLVAGGCAGVLAWAVATPMDVIKSRLQADGQGQHRYRGLLHCVVTSVREEGPRVLFKGLALNCCRAFPVNMVVFVAYEAVLRLTQSLLT.

Solcar repeat units lie at residues 1–80 (MDFV…CLAH), 93–208 (PTKA…LCEW), and 217–304 (PDVL…VLRL). A run of 6 helical transmembrane segments spans residues 3-23 (FVAGAIGGVCGVAVGYPLDTV), 55-75 (GLSLPVCTVSLVSSVSFGTYH), 98-114 (ITLSGCASGLVRVFLTS), 194-210 (SFATYFLSYAMLCEWLT), 219-239 (VLGVLVAGGCAGVLAWAVATP), and 280-298 (LALNCCRAFPVNMVVFVAY).

Belongs to the mitochondrial carrier (TC 2.A.29) family. As to expression, specifically expressed in liver (at protein level).

The protein localises to the mitochondrion inner membrane. It is found in the mitochondrion outer membrane. The enzyme catalyses NAD(+)(in) = NAD(+)(out). It catalyses the reaction acetyl-CoA(in) = acetyl-CoA(out). In terms of biological role, mitochondrial NAD(+) transporter that acts as a 'metabolic gate' in hepatic lipogenesis. Provides NAD(+) substrate to mitochondrial SIRT3 deacetylase and enables its NAD(+)-dependent activities in mitochondrial energy metabolism. This triggers downstream activation of PRKAA1/AMPK-alpha signaling cascade that negatively regulates sterol regulatory element-binding protein (SREBP) transcriptional activities and ATP-consuming lipogenesis to restore cellular energy balance. May transport other mitochondrial metabolites having an aromatic nucleotide and phosphate groups, such as acetyl-CoA. Does not transport amino acids. The transport mechanism remains to be elucidated. This is Solute carrier family 25 member 47 from Mus musculus (Mouse).